Reading from the N-terminus, the 557-residue chain is (-)-germacrene D synthase (557 aa).

Mg(2+) is bound by residues D310, D314, and E462. The DDXXD motif motif lies at 310 to 314; the sequence is DDIYD.

Belongs to the terpene synthase family. Tpsa subfamily. It depends on Mg(2+) as a cofactor. As to expression, expressed in flowers. Detected in stems, young leaves and tendrils.

Its subcellular location is the cytoplasm. It carries out the reaction (2E,6E)-farnesyl diphosphate + H2O = (1E,4S,5E,7R)-germacra-1(10),5-dien-11-ol + diphosphate. It catalyses the reaction (2E,6E)-farnesyl diphosphate = (-)-germacrene D + diphosphate. The protein operates within secondary metabolite biosynthesis; terpenoid biosynthesis. Its function is as follows. Involved in the biosynthesis of germacrene D. Can use farnesyl diphosphate as substrate, but not geranyl diphosphate or geranylgeranyl diphosphate. Produces mainly (-)-germacrene D along with gamma-cadinene. The chain is (-)-germacrene D synthase from Vitis vinifera (Grape).